A 189-amino-acid polypeptide reads, in one-letter code: Adenylate kinase (189 aa).

11-16 (GSGKGT) is an ATP binding site. An NMP region spans residues 31 to 60 (STGDVLRAEIKNGTELGKTAKGYIDQGQLI). Residues Thr-32, Arg-37, 58–60 (QLI), 86–89 (GFPR), and Gln-93 each bind AMP. The segment at 127-137 (KRGKDSGRADD) is LID. An ATP-binding site is contributed by Arg-128. AMP-binding residues include Arg-134 and Arg-145. Gly-173 contacts ATP.

This sequence belongs to the adenylate kinase family. As to quaternary structure, monomer.

The protein resides in the cytoplasm. The enzyme catalyses AMP + ATP = 2 ADP. It functions in the pathway purine metabolism; AMP biosynthesis via salvage pathway; AMP from ADP: step 1/1. Its function is as follows. Catalyzes the reversible transfer of the terminal phosphate group between ATP and AMP. Plays an important role in cellular energy homeostasis and in adenine nucleotide metabolism. The polypeptide is Adenylate kinase (Bacteroides thetaiotaomicron (strain ATCC 29148 / DSM 2079 / JCM 5827 / CCUG 10774 / NCTC 10582 / VPI-5482 / E50)).